Reading from the N-terminus, the 407-residue chain is Argininosuccinate synthase (407 aa).

ATP is bound by residues 16-24 (AYSGGLDTS) and Ala-44. L-citrulline is bound by residues Tyr-96 and Ser-101. Gly-126 is an ATP binding site. Thr-128, Asn-132, and Asp-133 together coordinate L-aspartate. Asn-132 contacts L-citrulline. Residues Arg-136, Ser-185, Ser-194, Glu-270, and Tyr-282 each contribute to the L-citrulline site.

This sequence belongs to the argininosuccinate synthase family. Type 1 subfamily. As to quaternary structure, homotetramer.

The protein resides in the cytoplasm. It catalyses the reaction L-citrulline + L-aspartate + ATP = 2-(N(omega)-L-arginino)succinate + AMP + diphosphate + H(+). It functions in the pathway amino-acid biosynthesis; L-arginine biosynthesis; L-arginine from L-ornithine and carbamoyl phosphate: step 2/3. The chain is Argininosuccinate synthase from Shewanella oneidensis (strain ATCC 700550 / JCM 31522 / CIP 106686 / LMG 19005 / NCIMB 14063 / MR-1).